A 536-amino-acid chain; its full sequence is Anthranilate synthase component 1 2 (536 aa).

Residues S59 and 299–301 (PYM) each bind L-tryptophan. 334–335 (GT) is a chorismate binding site. E361 serves as a coordination point for Mg(2+). Chorismate contacts are provided by residues Y449, R469, 487 to 489 (GAG), and G489. E502 is a binding site for Mg(2+).

The protein belongs to the anthranilate synthase component I family. As to quaternary structure, tetramer of two components I and two components II. It depends on Mg(2+) as a cofactor.

The catalysed reaction is chorismate + L-glutamine = anthranilate + pyruvate + L-glutamate + H(+). The protein operates within amino-acid biosynthesis; L-tryptophan biosynthesis; L-tryptophan from chorismate: step 1/5. The sequence is that of Anthranilate synthase component 1 2 (trpE2) from Haloarcula marismortui (strain ATCC 43049 / DSM 3752 / JCM 8966 / VKM B-1809) (Halobacterium marismortui).